Consider the following 123-residue polypeptide: 1,4-dihydroxy-2-naphthoyl-CoA hydrolase (123 aa).

Residue Glu-46 is the Nucleophile or proton acceptor of the active site.

This sequence belongs to the thioesterase PaaI family.

The enzyme catalyses 1,4-dihydroxy-2-naphthoyl-CoA + H2O = 1,4-dihydroxy-2-naphthoate + CoA + H(+). It participates in quinol/quinone metabolism; menaquinone biosynthesis. Catalyzes the hydrolysis of 1,4-dihydroxy-2-naphthoyl-CoA (DHNA-CoA) to 1,4-dihydroxy-2-naphthoate (DHNA) and free coenzyme A. Production of DHNA is required for protection against bacteriolysis in the cytosol of macrophages and tissue-specific virulence in vivo, suggesting that MenI is required to protect the bacteria from killing in the macrophage cytosol. The sequence is that of 1,4-dihydroxy-2-naphthoyl-CoA hydrolase from Listeria monocytogenes serotype 1/2a (strain 10403S).